Here is a 306-residue protein sequence, read N- to C-terminus: Mating type protein SmtA-1 (306 aa).

The alpha box DNA-binding region spans 49–104 (APKKKVNGFMGFRSYYSPLFSQFPQKARSPFMTILWQHDPFHNEWDFMCSVYSSIR).

Belongs to the MATALPHA1 family.

It localises to the nucleus. Functionally, mating type proteins are sequence specific DNA-binding proteins that act as master switches in fungal differentiation by controlling gene expression in a cell type-specific fashion. Transcriptional activator that induces the transcription of alpha-specific genes. The chain is Mating type protein SmtA-1 (SMTA1) from Sordaria macrospora (strain ATCC MYA-333 / DSM 997 / K(L3346) / K-hell).